The primary structure comprises 739 residues: Catalase-peroxidase (739 aa).

The disordered stretch occupies residues 1-20 (MGSNECPYSRQNANIGGGGQ). Positions 94-217 (WHSAGTYRVF…LAASHMGLIY (124 aa)) form a cross-link, tryptophyl-tyrosyl-methioninium (Trp-Tyr) (with M-243). H95 acts as the Proton acceptor in catalysis. A cross-link (tryptophyl-tyrosyl-methioninium (Tyr-Met) (with W-94)) is located at residues 217 to 243 (YVNPEGPNKNPDPVLAAKDIRITFGRM). A heme b-binding site is contributed by H258.

This sequence belongs to the peroxidase family. Peroxidase/catalase subfamily. Homodimer or homotetramer. The cofactor is heme b. In terms of processing, formation of the three residue Trp-Tyr-Met cross-link is important for the catalase, but not the peroxidase activity of the enzyme.

It localises to the cytoplasm. The enzyme catalyses H2O2 + AH2 = A + 2 H2O. It catalyses the reaction 2 H2O2 = O2 + 2 H2O. In terms of biological role, bifunctional enzyme with both catalase and broad-spectrum peroxidase activity. The sequence is that of Catalase-peroxidase from Emericella nidulans (strain FGSC A4 / ATCC 38163 / CBS 112.46 / NRRL 194 / M139) (Aspergillus nidulans).